Consider the following 315-residue polypeptide: MPNLKSIRDRIQSVKNTKKITEAMRLVAAARVRRAQEQVIATRPFADRLAQVLYGLQTRLRFEDVDLPLLKKREVKSVGLLVISGDRGLCGGYNTNVIRRAENRAKELKAEGLDYTFVIVGRKAEQYFRRREQPIDASYTGLEQIPTADEANKIADELLSLFLSEKVDRIELVYTRFVSLVSSRPVIQTLLPLDTQGLEAADDEIFRLTTRGGQFQVERQTVTSQARPLPRDMIFEQDPVQILDSLLPLYLSNQLLRALQESAASELAARMTAMSNASENAGELIKSLSLSYNKARQAAITQELLEVVGGAEALT.

This sequence belongs to the ATPase gamma chain family. In terms of assembly, F-type ATPases have 2 components, CF(1) - the catalytic core - and CF(0) - the membrane proton channel. CF(1) has five subunits: alpha(3), beta(3), gamma(1), delta(1), epsilon(1). CF(0) has three main subunits: a, b and c.

It is found in the cellular thylakoid membrane. Its function is as follows. Produces ATP from ADP in the presence of a proton gradient across the membrane. The gamma chain is believed to be important in regulating ATPase activity and the flow of protons through the CF(0) complex. This Nostoc sp. (strain PCC 7120 / SAG 25.82 / UTEX 2576) protein is ATP synthase gamma chain.